A 117-amino-acid chain; its full sequence is Multidrug resistance protein EbrB (117 aa).

The next 4 membrane-spanning stretches (helical) occupy residues 3–23, 31–51, 59–79, and 81–101; these read GLLY…MLKL, WPIA…SFSL, AYAT…FLLF, and ETIS…VVVL.

Belongs to the drug/metabolite transporter (DMT) superfamily. Small multidrug resistance (SMR) (TC 2.A.7.1) family. EbrA/EbrB subfamily. The efflux pump is composed of EbrA and EbrB.

Its subcellular location is the cell membrane. Its function is as follows. Part of a multidrug efflux pump. Confers resistance to cationic lipophilic dyes such as ethidium bromide, acriflavine, pyronine Y and safranin O. The efflux is probably coupled to an influx of protons. In Bacillus subtilis (strain 168), this protein is Multidrug resistance protein EbrB (ebrB).